A 359-amino-acid chain; its full sequence is MSKPPSDLPRRPPAAFAYEDEAAEPGDNGRQQQGRRRPESFSEDIVLTPDEEDPFINPDRDPSAVAVATPRKRRTSFGKIALAAFGILLSLGIGLWTDRLIRDLFSRADWLGYAALGVLAIGILAVLALVIREAAGMMRLAAVQTIKAEAEAAILETRPAKARAVVSRLTTLLAANPETSKGRATLKATEGEVIDPPHLIALAERELLAPLDRKARALIVNASKRVSIVTAVSPRAIVDLLYVLYESVRLIRAMAELYGGRPGTLGMFRLLRDVLAHLAVTGSIAVGDSLVQQVLGHGLASKLSARLGEGVINGLMTARIGIAAMDLCRPLAFRAVKRPGIGDFIGDLTPSMSPRGNNP.

The interval 1 to 61 (MSKPPSDLPR…EDPFINPDRD (61 aa)) is disordered. 2 helical membrane passes run 77 to 97 (FGKI…GLWT) and 111 to 131 (LGYA…ALVI).

This sequence belongs to the UPF0283 family.

It localises to the cell inner membrane. The sequence is that of UPF0283 membrane protein RHE_CH02332 from Rhizobium etli (strain ATCC 51251 / DSM 11541 / JCM 21823 / NBRC 15573 / CFN 42).